A 359-amino-acid polypeptide reads, in one-letter code: Ferredoxin--NADP reductase (359 aa).

FAD contacts are provided by Asp48, Gln56, Tyr61, Ala101, Phe139, Asp304, and Ser345. The segment at 340-359 is disordered; it reads VHTHTSNDTNLQSRLHAAAE. The span at 341–352 shows a compositional bias: polar residues; that stretch reads HTHTSNDTNLQS.

The protein belongs to the ferredoxin--NADP reductase type 2 family. As to quaternary structure, homodimer. FAD is required as a cofactor.

The enzyme catalyses 2 reduced [2Fe-2S]-[ferredoxin] + NADP(+) + H(+) = 2 oxidized [2Fe-2S]-[ferredoxin] + NADPH. The chain is Ferredoxin--NADP reductase from Ralstonia nicotianae (strain ATCC BAA-1114 / GMI1000) (Ralstonia solanacearum).